We begin with the raw amino-acid sequence, 499 residues long: Glycerol kinase (499 aa).

Residue threonine 13 coordinates ADP. Positions 13, 14, and 15 each coordinate ATP. Residue threonine 13 participates in sn-glycerol 3-phosphate binding. Arginine 17 is a binding site for ADP. The sn-glycerol 3-phosphate site is built by arginine 83, glutamate 84, tyrosine 135, and aspartate 245. Residues arginine 83, glutamate 84, tyrosine 135, aspartate 245, and glutamine 246 each coordinate glycerol. ADP is bound by residues threonine 267 and glycine 310. ATP contacts are provided by threonine 267, glycine 310, glutamine 314, and glycine 411. ADP-binding residues include glycine 411 and asparagine 415.

Belongs to the FGGY kinase family.

It carries out the reaction glycerol + ATP = sn-glycerol 3-phosphate + ADP + H(+). It functions in the pathway polyol metabolism; glycerol degradation via glycerol kinase pathway; sn-glycerol 3-phosphate from glycerol: step 1/1. With respect to regulation, inhibited by fructose 1,6-bisphosphate (FBP). Key enzyme in the regulation of glycerol uptake and metabolism. Catalyzes the phosphorylation of glycerol to yield sn-glycerol 3-phosphate. The sequence is that of Glycerol kinase from Xanthomonas campestris pv. campestris (strain 8004).